The primary structure comprises 345 residues: Dihydroorotate dehydrogenase (quinone) (345 aa).

FMN is bound by residues 65-69 (AGLDK) and Thr89. Lys69 provides a ligand contact to substrate. Residue 114-118 (NRMGF) participates in substrate binding. 2 residues coordinate FMN: Asn142 and Asn175. Asn175 contributes to the substrate binding site. The active-site Nucleophile is the Ser178. Position 180 (Asn180) interacts with substrate. Residues Lys220 and Thr248 each contribute to the FMN site. Residue 249–250 (NT) participates in substrate binding. FMN-binding positions include Gly271, Gly300, and 321–322 (YT).

The protein belongs to the dihydroorotate dehydrogenase family. Type 2 subfamily. As to quaternary structure, monomer. FMN is required as a cofactor.

The protein localises to the cell membrane. It catalyses the reaction (S)-dihydroorotate + a quinone = orotate + a quinol. It functions in the pathway pyrimidine metabolism; UMP biosynthesis via de novo pathway; orotate from (S)-dihydroorotate (quinone route): step 1/1. Functionally, catalyzes the conversion of dihydroorotate to orotate with quinone as electron acceptor. The polypeptide is Dihydroorotate dehydrogenase (quinone) (Burkholderia ambifaria (strain ATCC BAA-244 / DSM 16087 / CCUG 44356 / LMG 19182 / AMMD) (Burkholderia cepacia (strain AMMD))).